A 242-amino-acid polypeptide reads, in one-letter code: DnaJ homolog subfamily B member 3 (242 aa).

The J domain maps to 1-69; sequence MANYYEVLGV…KKRDVYDRYG (69 aa).

As to expression, testis specific.

May operate as a co-chaperone of the male germ cell- and haploid stage-specific Hsp70 proteins. The chain is DnaJ homolog subfamily B member 3 (DNAJB3) from Macaca fuscata fuscata (Japanese macaque).